The primary structure comprises 109 residues: Nucleoid-associated protein LBUL_1514 (109 aa).

It belongs to the YbaB/EbfC family. Homodimer.

It is found in the cytoplasm. The protein resides in the nucleoid. Binds to DNA and alters its conformation. May be involved in regulation of gene expression, nucleoid organization and DNA protection. The protein is Nucleoid-associated protein LBUL_1514 of Lactobacillus delbrueckii subsp. bulgaricus (strain ATCC BAA-365 / Lb-18).